A 23-amino-acid polypeptide reads, in one-letter code: Aurein-4.4 (23 aa).

It belongs to the frog skin active peptide (FSAP) family. Aurein subfamily. As to expression, expressed by the skin dorsal glands.

It localises to the secreted. Its function is as follows. Has no antimicrobial or anticancer activity. This is Aurein-4.4 from Ranoidea aurea (Green and golden bell frog).